Consider the following 111-residue polypeptide: Antitoxin PrlF (111 aa).

Positions 12–59 (TTESKVTIRGQTTIPAPVREALKLKPGQDSIHYEILPGGQVFMCRLGD) constitute a SpoVT-AbrB domain.

In terms of assembly, homodimer; forms a complex with YhaV with stoichiometry PrlF(2)-YhaV(4), possibly as a YhaV(2)-PrlF(2)-YhaV(2) complex like the MazFE complex. This complex is seen to dimerize in solution.

Its subcellular location is the cytoplasm. Its function is as follows. Antitoxin component of a type II toxin-antitoxin (TA) system. Labile antitoxin that binds to the YhaV toxin and neutralizes its ribonuclease activity. Also acts as a transcription factor. The YhaV/PrlF complex binds the prlF-yhaV operon, probably negatively regulating its expression. Negatively regulates its own expression as well as relieving the export block imposed by high-level synthesis of the LamB-LacZ hybrid protein. Overexpression leads to increased doubling time and also suppresses a htrA (degP) null phenotype. The protein is Antitoxin PrlF (prlF) of Escherichia coli (strain K12).